Here is a 267-residue protein sequence, read N- to C-terminus: Staphylococcal secretory antigen ssaA2 (267 aa).

The signal sequence occupies residues 1–27 (MKKIATATIATAGFATIAIASGNQAHA). Repeat copies occupy residues 83-85 (YNN), 86-88 (YNN), 89-91 (YNN), 95-97 (YNN), 101-103 (YNN), 104-106 (YSN), and 113-115 (YNN). The segment at 83-115 (YNNYNNYNNGYSYNNYSRYNNYSNNNQSYNYNN) is 7 X 3 AA repeats of Y-[NS]-N. The region spanning 146–267 (MAPSSNGRSI…SQAAGYNFIH (122 aa)) is the Peptidase C51 domain.

It is found in the secreted. Its function is as follows. Not known; immunogenic protein. The chain is Staphylococcal secretory antigen ssaA2 (ssaA2) from Staphylococcus aureus (strain NCTC 8325 / PS 47).